Consider the following 393-residue polypeptide: Riboflavin biosynthesis protein RibBA (393 aa).

The interval 1–200 (MQFDNIDSAL…IDDLIEYRKK (200 aa)) is DHBP synthase. Residues 27 to 28 (RE), Asp32, 139 to 143 (RNGHT), and Glu163 each bind D-ribulose 5-phosphate. Glu28 contributes to the Mg(2+) binding site. His142 lines the Mg(2+) pocket. The GTP cyclohydrolase II stretch occupies residues 201 to 393 (LEPEIEFKAK…TKKIKMGHLI (193 aa)). 249 to 253 (RLHSA) lines the GTP pocket. Cys254, Cys265, and Cys267 together coordinate Zn(2+). GTP is bound by residues Gln270, 291-293 (EGR), and Thr313. Asp325 acts as the Proton acceptor; for GTP cyclohydrolase activity in catalysis. Arg327 functions as the Nucleophile; for GTP cyclohydrolase activity in the catalytic mechanism. Ser348 and Lys353 together coordinate GTP.

This sequence in the N-terminal section; belongs to the DHBP synthase family. In the C-terminal section; belongs to the GTP cyclohydrolase II family. Mg(2+) serves as cofactor. Requires Mn(2+) as cofactor. Zn(2+) is required as a cofactor.

The enzyme catalyses D-ribulose 5-phosphate = (2S)-2-hydroxy-3-oxobutyl phosphate + formate + H(+). The catalysed reaction is GTP + 4 H2O = 2,5-diamino-6-hydroxy-4-(5-phosphoribosylamino)-pyrimidine + formate + 2 phosphate + 3 H(+). It participates in cofactor biosynthesis; riboflavin biosynthesis; 2-hydroxy-3-oxobutyl phosphate from D-ribulose 5-phosphate: step 1/1. It functions in the pathway cofactor biosynthesis; riboflavin biosynthesis; 5-amino-6-(D-ribitylamino)uracil from GTP: step 1/4. Functionally, catalyzes the conversion of D-ribulose 5-phosphate to formate and 3,4-dihydroxy-2-butanone 4-phosphate. Its function is as follows. Catalyzes the conversion of GTP to 2,5-diamino-6-ribosylamino-4(3H)-pyrimidinone 5'-phosphate (DARP), formate and pyrophosphate. In Staphylococcus aureus (strain MRSA252), this protein is Riboflavin biosynthesis protein RibBA.